Here is a 199-residue protein sequence, read N- to C-terminus: Recombination protein RecR (199 aa).

The C4-type zinc finger occupies 58–73 (CLNCGNIGTSDICDIC). A Toprim domain is found at 81–176 (GEICVVEDVA…AVTSLAQGVP (96 aa)).

The protein belongs to the RecR family.

In terms of biological role, may play a role in DNA repair. It seems to be involved in an RecBC-independent recombinational process of DNA repair. It may act with RecF and RecO. This is Recombination protein RecR from Dinoroseobacter shibae (strain DSM 16493 / NCIMB 14021 / DFL 12).